The following is a 406-amino-acid chain: Tryptophan 2,3-dioxygenase (406 aa).

Ser19 is modified (phosphoserine). Residues Phe72 to His76 and Arg144 each bind substrate. Residue His328 participates in heme binding. Residue Thr342 coordinates substrate.

This sequence belongs to the tryptophan 2,3-dioxygenase family. In terms of assembly, homotetramer. Dimer of dimers. Requires heme as cofactor.

It carries out the reaction L-tryptophan + O2 = N-formyl-L-kynurenine. The protein operates within amino-acid degradation; L-tryptophan degradation via kynurenine pathway; L-kynurenine from L-tryptophan: step 1/2. Functionally, heme-dependent dioxygenase that catalyzes the oxidative cleavage of the L-tryptophan (L-Trp) pyrrole ring and converts L-tryptophan to N-formyl-L-kynurenine. Catalyzes the oxidative cleavage of the indole moiety. In Mus musculus (Mouse), this protein is Tryptophan 2,3-dioxygenase.